Reading from the N-terminus, the 62-residue chain is Amolopin-P2 (62 aa).

An N-terminal signal peptide occupies residues 1–22 (MFTLKKSLLLLFFLGTISLSLC). The propeptide occupies 23-44 (EQERGADEEENGGEVTEQEVKR).

Belongs to the frog skin active peptide (FSAP) family. Amolopin subfamily. As to expression, expressed by the skin glands.

Its subcellular location is the secreted. In terms of biological role, antimicrobial peptide with activity against Gram-positive bacteria. Has been tested against S.aureus (MIC=37.5 ug/mL), against B.pumilus (MIC=75.0 ug/mL), B.cereus (no activity detected). Does not show activity against Gram-negative bacteria (E.coli, B.dysenteriae, A.calcoaceticus, P.aeruginosa) and fungi (C.albicans). Does not show hemolytic activity against rabbit erythrocytes. This is Amolopin-P2 from Amolops loloensis (Lolokou Sucker Frog).